The primary structure comprises 134 residues: Large ribosomal subunit protein uL16 (134 aa).

A compositionally biased stretch (basic residues) spans 1-20 (MLLQPKRTKFRKMHKGRNRG). Residues 1-21 (MLLQPKRTKFRKMHKGRNRGT) form a disordered region.

This sequence belongs to the universal ribosomal protein uL16 family. In terms of assembly, part of the 50S ribosomal subunit.

Its function is as follows. Binds 23S rRNA and is also seen to make contacts with the A and possibly P site tRNAs. This Blochmanniella pennsylvanica (strain BPEN) protein is Large ribosomal subunit protein uL16.